The sequence spans 241 residues: Lactate utilization protein C (241 aa).

Belongs to the LutC/YkgG family.

Its function is as follows. Is involved in L-lactate degradation and allows cells to grow with lactate as the sole carbon source. The chain is Lactate utilization protein C from Bacillus velezensis (strain DSM 23117 / BGSC 10A6 / LMG 26770 / FZB42) (Bacillus amyloliquefaciens subsp. plantarum).